The sequence spans 53 residues: UPF0391 membrane protein PC1_0455 (53 aa).

Helical transmembrane passes span 4–24 (WGIIFLVIALIAAALGFGGLA) and 30–47 (AAKIVFVVGIILFLLSLF).

The protein belongs to the UPF0391 family.

It is found in the cell membrane. The sequence is that of UPF0391 membrane protein PC1_0455 from Pectobacterium carotovorum subsp. carotovorum (strain PC1).